Consider the following 400-residue polypeptide: Probable peptidoglycan glycosyltransferase FtsW (400 aa).

Topologically, residues 1-24 are cytoplasmic; that stretch reads MSTGSLPLGLPSRDSLDGLRNSVD. Residues 25 to 45 form a helical membrane-spanning segment; it reads LPLLAAAALLLGLGLIMVASA. At 46–63 the chain is on the periplasmic side; the sequence is SMDLGERYYGNTWHFFQR. A helical transmembrane segment spans residues 64–84; the sequence is QVLFAAIGLALATVMWAIPLE. The Cytoplasmic portion of the chain corresponds to 85-88; sequence RWER. A helical membrane pass occupies residues 89–109; that stretch reads AGPWLLILVMVLLIAVLLPGV. Over 110 to 118 the chain is Periplasmic; it reads GRTVNGATR. Residues 119 to 139 form a helical membrane-spanning segment; sequence WIPIGMFNLQVAEPVKLLVVM. Residues 140-153 are Cytoplasmic-facing; the sequence is YLAGYIVRHYSALR. Residues 154 to 174 traverse the membrane as a helical segment; it reads LHLRGFVRPLVVLGFGTVLLL. Topologically, residues 175-177 are periplasmic; sequence LQP. Residues 178–198 form a helical membrane-spanning segment; that stretch reads DFGGAAIMLAIGMGMLFLAGA. Residue Lys199 is a topological domain, cytoplasmic. Residues 200–220 traverse the membrane as a helical segment; the sequence is LWQFAALGATIAVGMAFVAVA. Residues 221-278 lie on the Periplasmic side of the membrane; sequence APYRVARLTAFLDPWQDPFATGFQLTQSLIAIGSGGWFGTGLGNSVQKLFYLPEAHND. The chain crosses the membrane as a helical span at residues 279-299; it reads FLFAVFAEEFGFIGVLALIAL. Topologically, residues 300–324 are cytoplasmic; sequence FAVVVWRCVKIGLWAERAGHAFGSH. A helical transmembrane segment spans residues 325 to 345; that stretch reads LAFGVAIWLALQSALNLAVNM. The Periplasmic segment spans residues 346–354; that stretch reads GLLPTKGMT. A helical transmembrane segment spans residues 355–375; sequence LPFLSYGGSSLIVTLMAIGLV. Over 376 to 400 the chain is Cytoplasmic; that stretch reads MRVYREAQIPAPRQSTPPRRKRGQA.

The protein belongs to the SEDS family. FtsW subfamily.

The protein localises to the cell inner membrane. It catalyses the reaction [GlcNAc-(1-&gt;4)-Mur2Ac(oyl-L-Ala-gamma-D-Glu-L-Lys-D-Ala-D-Ala)](n)-di-trans,octa-cis-undecaprenyl diphosphate + beta-D-GlcNAc-(1-&gt;4)-Mur2Ac(oyl-L-Ala-gamma-D-Glu-L-Lys-D-Ala-D-Ala)-di-trans,octa-cis-undecaprenyl diphosphate = [GlcNAc-(1-&gt;4)-Mur2Ac(oyl-L-Ala-gamma-D-Glu-L-Lys-D-Ala-D-Ala)](n+1)-di-trans,octa-cis-undecaprenyl diphosphate + di-trans,octa-cis-undecaprenyl diphosphate + H(+). It functions in the pathway cell wall biogenesis; peptidoglycan biosynthesis. Its function is as follows. Peptidoglycan polymerase that is essential for cell division. The protein is Probable peptidoglycan glycosyltransferase FtsW of Thioalkalivibrio sp. (strain K90mix).